Here is a 104-residue protein sequence, read N- to C-terminus: MYAIFKNGGKQYKVVEGSIILLDKMSLEPKSKVELNEVLAIVDGDKTDVGTPFVKGAKIEAEVINEGRGKKVVTFKKRRRKDSKTKRGFRRDFTRVRILKIVAK.

It belongs to the bacterial ribosomal protein bL21 family. As to quaternary structure, part of the 50S ribosomal subunit. Contacts protein L20.

In terms of biological role, this protein binds to 23S rRNA in the presence of protein L20. This chain is Large ribosomal subunit protein bL21, found in Helicobacter hepaticus (strain ATCC 51449 / 3B1).